We begin with the raw amino-acid sequence, 432 residues long: Glutamate-1-semialdehyde 2,1-aminomutase 1 (432 aa).

Lysine 268 is modified (N6-(pyridoxal phosphate)lysine).

It belongs to the class-III pyridoxal-phosphate-dependent aminotransferase family. HemL subfamily. As to quaternary structure, homodimer. Pyridoxal 5'-phosphate serves as cofactor.

The protein localises to the cytoplasm. It carries out the reaction (S)-4-amino-5-oxopentanoate = 5-aminolevulinate. It functions in the pathway porphyrin-containing compound metabolism; protoporphyrin-IX biosynthesis; 5-aminolevulinate from L-glutamyl-tRNA(Glu): step 2/2. The sequence is that of Glutamate-1-semialdehyde 2,1-aminomutase 1 from Bacillus cereus (strain ZK / E33L).